The following is a 319-amino-acid chain: Lipoyl synthase (319 aa).

Residues 1-28 (MVVLVDTVSSTPVRPRHPEKAARPDALS) are disordered. Positions 16 to 28 (RHPEKAARPDALS) are enriched in basic and acidic residues. [4Fe-4S] cluster contacts are provided by cysteine 61, cysteine 66, cysteine 72, cysteine 87, cysteine 91, cysteine 94, and serine 300. The Radical SAM core domain maps to 73-289 (WDKKHATFMI…AKTAYAKGFL (217 aa)).

This sequence belongs to the radical SAM superfamily. Lipoyl synthase family. The cofactor is [4Fe-4S] cluster.

Its subcellular location is the cytoplasm. It carries out the reaction [[Fe-S] cluster scaffold protein carrying a second [4Fe-4S](2+) cluster] + N(6)-octanoyl-L-lysyl-[protein] + 2 oxidized [2Fe-2S]-[ferredoxin] + 2 S-adenosyl-L-methionine + 4 H(+) = [[Fe-S] cluster scaffold protein] + N(6)-[(R)-dihydrolipoyl]-L-lysyl-[protein] + 4 Fe(3+) + 2 hydrogen sulfide + 2 5'-deoxyadenosine + 2 L-methionine + 2 reduced [2Fe-2S]-[ferredoxin]. Its pathway is protein modification; protein lipoylation via endogenous pathway; protein N(6)-(lipoyl)lysine from octanoyl-[acyl-carrier-protein]: step 2/2. Functionally, catalyzes the radical-mediated insertion of two sulfur atoms into the C-6 and C-8 positions of the octanoyl moiety bound to the lipoyl domains of lipoate-dependent enzymes, thereby converting the octanoylated domains into lipoylated derivatives. This Rhodopseudomonas palustris (strain HaA2) protein is Lipoyl synthase.